The following is a 431-amino-acid chain: uncharacterized protein (431 aa).

Transmembrane regions (helical) follow at residues 33-53, 63-83, 111-131, 143-163, 197-217, 241-261, 273-293, 318-338, 358-378, 383-403, and 407-427; these read VARVGTATAVTALCGYAVIYL, FSVFGVFWGAFGLVTGAANGL, VSGMVGLGSLVVIAGSSPLWS, VALLSIGLAGFCLHATLLGML, LVGFIWATVAGSVAWLIMLMT, AHSIIAAGASAILVMGFPVLL, GVVILAVTLTRAPLLVPLTAM, LIGGVGAVGMLAAGVVGPWIM, AAAVAIAMLTLTGAAAVAAAL, SLGWVGATVGSGLLLLLPLSL, and TVVALLCGPLVGIGVHLVALA.

To M.tuberculosis Rv1510 and Rv3630.

The protein resides in the cell membrane. This is an uncharacterized protein from Mycobacterium bovis (strain ATCC BAA-935 / AF2122/97).